Consider the following 140-residue polypeptide: Gastrula zinc finger protein XlCGF49.1 (140 aa).

5 consecutive C2H2-type zinc fingers follow at residues 6-28, 34-56, 62-84, 90-112, and 118-140; these read FTCMECSKSFSQKSNLQTHYKIH, FTCMECGRTFSQKSTLLSHYKMH, FSCSECGKSFSHKNKLTLHQKIH, YACTECGKRFPEKSKLKIHWKIH, and FSCTECGKKFSRESNLYFHQKMH.

This sequence belongs to the krueppel C2H2-type zinc-finger protein family.

Its subcellular location is the nucleus. Its function is as follows. May be involved in transcriptional regulation. The sequence is that of Gastrula zinc finger protein XlCGF49.1 from Xenopus laevis (African clawed frog).